Consider the following 915-residue polypeptide: Translation initiation factor IF-2 (915 aa).

Disordered stretches follow at residues 1–105 and 121–295; these read MSEG…RALT and VEAA…RAAI. The span at 57 to 81 shows a compositional bias: low complexity; it reads PGTPSAPEGGSSSAPAPQSGNAPQG. A compositionally biased stretch (gly residues) spans 84 to 101; that stretch reads RSGGGNRGSGRGGAGGAG. Basic and acidic residues-rich tracts occupy residues 121 to 135 and 143 to 180; these read VEAA…EQEK and EEAR…RKAA. A compositionally biased stretch (pro residues) spans 186 to 195; that stretch reads AEAPPVPPPA. Low complexity-rich tracts occupy residues 201–213 and 230–239; these read AAPS…SRTA and KVPVAAPSAP. Residues 243 to 256 are compositionally biased toward basic and acidic residues; sequence RLRERGDEGEEERK. Over residues 266–278 the composition is skewed to low complexity; the sequence is PAPRKAAAPVAKK. The segment covering 279 to 295 has biased composition (basic and acidic residues); the sequence is AVAEPRRGGRIDVRAAI. Positions 414–584 constitute a tr-type G domain; sequence PRPPVVTVMG…LLQAEVLDLK (171 aa). A G1 region spans residues 423–430; it reads GHVDHGKT. Residue 423 to 430 participates in GTP binding; sequence GHVDHGKT. Positions 448–452 are G2; the sequence is GITQH. The G3 stretch occupies residues 470-473; that stretch reads DTPG. Residues 470 to 474 and 524 to 527 each bind GTP; these read DTPGH and NKCD. Residues 524–527 are G4; sequence NKCD. A G5 region spans residues 560–562; it reads SAL.

Belongs to the TRAFAC class translation factor GTPase superfamily. Classic translation factor GTPase family. IF-2 subfamily.

Its subcellular location is the cytoplasm. Its function is as follows. One of the essential components for the initiation of protein synthesis. Protects formylmethionyl-tRNA from spontaneous hydrolysis and promotes its binding to the 30S ribosomal subunits. Also involved in the hydrolysis of GTP during the formation of the 70S ribosomal complex. This chain is Translation initiation factor IF-2, found in Granulibacter bethesdensis (strain ATCC BAA-1260 / CGDNIH1).